Consider the following 159-residue polypeptide: MKLHELYPFPEERASRKRVGRGRATGWGCTSGRGNKGQNSRAGAKHRAWFEGGQMPIARRLPKRGFKNYPFKVVFQPINLDRLLASFDGKDAITLDDIYDRGLAPAGALVKILSVGEVAAAVTVEAHKFSAKAAEKITAAGGKVIALGTPEALTETPTE.

The disordered stretch occupies residues 14-44 (ASRKRVGRGRATGWGCTSGRGNKGQNSRAGA). A compositionally biased stretch (gly residues) spans 23-35 (RATGWGCTSGRGN).

It belongs to the universal ribosomal protein uL15 family. As to quaternary structure, part of the 50S ribosomal subunit.

Functionally, binds to the 23S rRNA. The sequence is that of Large ribosomal subunit protein uL15 from Solidesulfovibrio magneticus (strain ATCC 700980 / DSM 13731 / RS-1) (Desulfovibrio magneticus).